The following is a 439-amino-acid chain: Serine hydroxymethyltransferase (439 aa).

(6S)-5,6,7,8-tetrahydrofolate is bound at residue 127-129 (AHV). Residue Lys-233 is modified to N6-(pyridoxal phosphate)lysine.

Belongs to the SHMT family. As to quaternary structure, homodimer. Pyridoxal 5'-phosphate is required as a cofactor.

Its subcellular location is the cytoplasm. Its pathway is amino-acid biosynthesis; glycine biosynthesis; glycine from L-serine: step 1/1. Catalyzes the reversible interconversion of serine and glycine with a modified folate serving as the one-carbon carrier. Also exhibits a pteridine-independent aldolase activity toward beta-hydroxyamino acids, producing glycine and aldehydes, via a retro-aldol mechanism. The protein is Serine hydroxymethyltransferase of Aeropyrum pernix (strain ATCC 700893 / DSM 11879 / JCM 9820 / NBRC 100138 / K1).